The chain runs to 346 residues: NADH-ubiquinone oxidoreductase chain 2 (346 aa).

11 consecutive transmembrane segments (helical) span residues 1 to 21, 25 to 45, 60 to 80, 95 to 115, 124 to 144, 149 to 169, 178 to 195, 200 to 219, 242 to 262, 274 to 294, and 326 to 346; these read MNPH…TITI, HWVL…PLIS, FLTQ…NAWA, CLLL…HFWF, LMTA…LLLM, LNPA…GWMG, ILAF…IILV, LALL…FMAL, ATLM…GFMP, EMTP…FFYL, and AILA…HAIV.

It belongs to the complex I subunit 2 family.

The protein resides in the mitochondrion inner membrane. The catalysed reaction is a ubiquinone + NADH + 5 H(+)(in) = a ubiquinol + NAD(+) + 4 H(+)(out). Its function is as follows. Core subunit of the mitochondrial membrane respiratory chain NADH dehydrogenase (Complex I) that is believed to belong to the minimal assembly required for catalysis. Complex I functions in the transfer of electrons from NADH to the respiratory chain. The immediate electron acceptor for the enzyme is believed to be ubiquinone. The sequence is that of NADH-ubiquinone oxidoreductase chain 2 (MT-ND2) from Mareca penelope (Eurasian wigeon).